The primary structure comprises 99 residues: Goannatyrotoxin-Vere1 (99 aa).

A signal peptide spans 1–28; the sequence is MIASMKPWPLVMVAALCILFCLGTLVDA. At Tyr64 the chain carries Tyrosine amide. Residues 68 to 99 constitute a propeptide, C-terminal extension; it reads SSPETLMSELIFGENSNSDHSSRSRFDDSYMW.

Belongs to the NPY family. As to expression, expressed by the mandibular venom gland.

Its subcellular location is the secreted. Its function is as follows. Shows a potent unique triphasic action, rapid biphasic hypertension followed by prolonged hypotension. The sequence is that of Goannatyrotoxin-Vere1 from Varanus eremius (Rusty desert monitor).